Consider the following 1139-residue polypeptide: Sterol regulatory element-binding protein 2 (1139 aa).

Residues 1-50 (MDESSELGGLETMDTLTELGDELTLGDIDEMLQFVSNQVGEFPDLFSEQL) are transcriptional activation (acidic). Residues 1 to 479 (MDESSELGGL…VALGMVDRSR (479 aa)) lie on the Cytoplasmic side of the membrane. 2 disordered regions span residues 48-104 (EQLC…SPST) and 119-143 (TPPR…SAQL). A compositionally biased stretch (low complexity) spans 61-77 (GSSSSSNSSSSSGSNSR). Polar residues predominate over residues 90-104 (RSFSQVPLPTFSPST). The segment covering 119-138 (TPPRATPVLQPRPQPQPQPQ) has biased composition (pro residues). The interval 235-489 (QQVPVLVQPQ…ILLCVLTFLG (255 aa)) is interaction with LMNA. The region spanning 328–378 (ERRTTHNIIEKRYRSSINDKIIELKDLVMGTDAKMHKSGVLRKAIDYIKYL) is the bHLH domain. Residues 378–399 (LQQVNHKLRQENMVLKLANQKN) form a leucine-zipper region. Lysine 462 participates in a covalent cross-link: Glycyl lysine isopeptide (Lys-Gly) (interchain with G-Cter in SUMO2). A helical transmembrane segment spans residues 480 to 500 (ILLCVLTFLGLSFSPLTSLLQ). Topologically, residues 501–531 (WGGAHDTDQHPYSGSGRSVLSLESGSGGWFD) are lumenal. A helical transmembrane segment spans residues 532–552 (WMMPTLLLWLVNGVIVLSVFV). Topologically, residues 553–1139 (KLLVHGEPVI…LGGGTAIAAS (587 aa)) are cytoplasmic. Position 1096 is a phosphoserine (serine 1096).

Belongs to the SREBP family. In terms of assembly, homodimer; efficient DNA binding of the soluble transcription factor fragment requires dimerization with another bHLH protein. Interacts with LMNA. As to quaternary structure, forms a tight complex with SCAP, the SCAP-SREBP complex, in the endoplasmic reticulum membrane and the Golgi apparatus. Interacts with PAQR3; the interaction anchors the SCAP-SREBP complex to the Golgi apparatus in low cholesterol conditions. Interacts (via C-terminal domain) with RNF139. Processed in the Golgi apparatus, releasing the protein from the membrane. At low cholesterol the SCAP-SREBP complex is recruited into COPII vesicles for export from the endoplasmic reticulum. In the Golgi, complex SREBPs are cleaved sequentially by site-1 (MBTPS1, S1P) and site-2 (MBTPS2, S2P) proteases. The first cleavage by site-1 protease occurs within the luminal loop, the second cleavage by site-2 protease occurs within the first transmembrane domain, releasing the transcription factor from the Golgi membrane. Apoptosis triggers cleavage by the cysteine proteases caspase-3 and caspase-7. Cleavage and activation is induced by mediated cholesterol efflux. In terms of processing, phosphorylated by AMPK, leading to suppress protein processing and nuclear translocation, and repress target gene expression. Post-translationally, SCAP-free SREBF2 is ubiquitinated by the BCR(ARMC5) complex, leading to its degradation. Ubiquitinated; the nuclear form has a rapid turnover and is rapidly ubiquitinated and degraded by the proteasome in the nucleus.

The protein localises to the endoplasmic reticulum membrane. It localises to the golgi apparatus membrane. Its subcellular location is the cytoplasmic vesicle. It is found in the COPII-coated vesicle membrane. The protein resides in the nucleus. Its activity is regulated as follows. Activation by cleavage is down-regulated upon activation of SIRT3-dependent PRKAA1/AMPK-alpha signaling cascade which leads to inhibition of ATP-consuming lipogenesis to restore cellular energy balance. In terms of biological role, precursor of the transcription factor form (Processed sterol regulatory element-binding protein 2), which is embedded in the endoplasmic reticulum membrane. Low sterol concentrations promote processing of this form, releasing the transcription factor form that translocates into the nucleus and activates transcription of genes involved in cholesterol biosynthesis. Its function is as follows. Key transcription factor that regulates expression of genes involved in cholesterol biosynthesis. Binds to the sterol regulatory element 1 (SRE-1) (5'-ATCACCCCAC-3'). Has dual sequence specificity binding to both an E-box motif (5'-ATCACGTGA-3') and to SRE-1 (5'-ATCACCCCAC-3'). Regulates transcription of genes related to cholesterol synthesis pathway. This Cricetulus griseus (Chinese hamster) protein is Sterol regulatory element-binding protein 2 (SREBF2).